The chain runs to 88 residues: uncharacterized protein (88 aa).

The dksA C4-type zinc-finger motif lies at 39-63 (CEECGAPIPQARREAIPGVRLCIHC).

This is an uncharacterized protein from Escherichia coli (strain K12).